The chain runs to 394 residues: ATP-dependent RNA helicase fal1 (394 aa).

The short motif at 21–49 (SSFEEMNLKEDLLRGIYAYGYETPSAVQS) is the Q motif element. In terms of domain architecture, Helicase ATP-binding spans 52–222 (IIQICKGRDV…NKFTTNPVRI (171 aa)). 65–72 (AQSGTGKT) is an ATP binding site. Phosphoserine is present on Ser67. A DEAD box motif is present at residues 170 to 173 (DEAD). The Helicase C-terminal domain maps to 233 to 394 (GLKQYFIAVE…EMPMNIGDMV (162 aa)).

It belongs to the DEAD box helicase family. DDX48/FAL1 subfamily.

It localises to the nucleus. The protein resides in the nucleolus. It carries out the reaction ATP + H2O = ADP + phosphate + H(+). In terms of biological role, ATP-dependent RNA helicase involved in 40S ribosomal subunit biogenesis. Required for the processing and cleavage of 35S pre-rRNA at sites A0, A1, and A2, leading to mature 18S rRNA. The chain is ATP-dependent RNA helicase fal1 (tif412) from Schizosaccharomyces pombe (strain 972 / ATCC 24843) (Fission yeast).